We begin with the raw amino-acid sequence, 632 residues long: Mediator of RNA polymerase II transcription subunit 17 (632 aa).

2 disordered regions span residues methionine 1–serine 21 and glutamate 50–threonine 72. Residues proline 11 to serine 21 are compositionally biased toward basic and acidic residues. Residues glutamate 58–threonine 72 show a composition bias toward acidic residues.

It belongs to the Mediator complex subunit 17 family. In terms of assembly, component of the Mediator complex.

It is found in the nucleus. Its function is as follows. Component of the Mediator complex, a coactivator involved in the regulated transcription of nearly all RNA polymerase II-dependent genes. Mediator functions as a bridge to convey information from gene-specific regulatory proteins to the basal RNA polymerase II transcription machinery. Mediator is recruited to promoters by direct interactions with regulatory proteins and serves as a scaffold for the assembly of a functional preinitiation complex with RNA polymerase II and the general transcription factors. This chain is Mediator of RNA polymerase II transcription subunit 17 (srb4), found in Emericella nidulans (strain FGSC A4 / ATCC 38163 / CBS 112.46 / NRRL 194 / M139) (Aspergillus nidulans).